The following is a 486-amino-acid chain: NADH-quinone oxidoreductase subunit N (486 aa).

14 helical membrane-spanning segments follow: residues 11–31 (ALPEIVLLIAVSAILIIDLFV), 44–64 (MLALVATGAATLAAWLPYPVL), 74–94 (PIASVAKLGLVVATGVAMIYA), 103–123 (FLKGELFTLMLFALLGMCVMV), 128–148 (MLTLYIGLELLSLALYALIAL), 163–183 (FVLGALASGLLLYGVSMVYGG), 206–226 (VSLGLVFIVAGLAFKLGAVPF), 238–258 (PTAVTLFVGSAPKLAAFVFVI), 267–287 (PAAVAWQPMLILLAIASLVVG), 300–320 (MLAYSTISHMGFMLIGILAAT), 328–348 (MFYAITYMLMALAGFGVLLAL), 371–391 (YALLVLLVMFSMAGIPPLVGF), 404–424 (VGLTWLAVVGVVMSLIGAFYY), and 452–472 (LVLGVNGLVLLGLGILPNGLY).

It belongs to the complex I subunit 2 family. NDH-1 is composed of 14 different subunits. Subunits NuoA, H, J, K, L, M, N constitute the membrane sector of the complex.

The protein resides in the cell inner membrane. The enzyme catalyses a quinone + NADH + 5 H(+)(in) = a quinol + NAD(+) + 4 H(+)(out). In terms of biological role, NDH-1 shuttles electrons from NADH, via FMN and iron-sulfur (Fe-S) centers, to quinones in the respiratory chain. The immediate electron acceptor for the enzyme in this species is believed to be ubiquinone. Couples the redox reaction to proton translocation (for every two electrons transferred, four hydrogen ions are translocated across the cytoplasmic membrane), and thus conserves the redox energy in a proton gradient. This chain is NADH-quinone oxidoreductase subunit N, found in Laribacter hongkongensis (strain HLHK9).